A 612-amino-acid chain; its full sequence is MNSNSQIRSSRLIEALHAYYSKYLVVTIRPIRYLVEPWQPCWPSEELWNSFNTSIDGKLQQLKPAAHVCYEPNFDKGACDDLLRLSRDSGWRASHPGVLQDWVWEAGESANETCPMGSLQTATAAKSCHQGRIPLYSATVESAQQVQQAVRFARRHNLRLVIRNTGHDLAGRSSAPDSFQIHTHRLQETQFHTDLRLNGSTASLGPAVTVGAGVMMGNLYARAAREGYMVLGGDCPTVGVAGGFLQGGGVSDFLSLNQGLGVDNVLEYEIVTADGELLVANTLQNQELFWALRGGGGGTFGVVTRATMRVFPDVPAVISEVLLQAPQTNSSSWTEGLSVILNALQSLNRDDVGGQLVIAVQPELAVQASIKFFFLNSTETTIIDERMKSLLTDLNRIDIQYTLSSKALPHFSSNYRQVPDIHSDNDYGVIGSTVAISKELFDSSQGPQKIARALANLPMSPGDLLFTSNLGGRVISNGEIAETSMHPAWRAASQLLNYIHAVGPSIESRVNALERLTNVQMPMLYAIDPNFRLSYRNVGDPNEKDFQQVYWGSNYKRLSQIKKRWDSDGLFFSKLGVGSELWDSEGMCRKNQSVVRQAVNYLMSFATSMVEG.

The 185-residue stretch at 129–313 folds into the FAD-binding PCMH-type domain; the sequence is HQGRIPLYSA…TRATMRVFPD (185 aa).

It belongs to the oxygen-dependent FAD-linked oxidoreductase family. FAD is required as a cofactor.

Its pathway is alkaloid biosynthesis; ergot alkaloid biosynthesis. FAD-linked oxidoreductase; part of the gene cluster that mediates the biosynthesis of fungal ergot alkaloid. DmaW catalyzes the first step of ergot alkaloid biosynthesis by condensing dimethylallyl diphosphate (DMAP) and tryptophan to form 4-dimethylallyl-L-tryptophan. The second step is catalyzed by the methyltransferase easF that methylates 4-dimethylallyl-L-tryptophan in the presence of S-adenosyl-L-methionine, resulting in the formation of 4-dimethylallyl-L-abrine. The catalase easC and the FAD-dependent oxidoreductase easE then transform 4-dimethylallyl-L-abrine to chanoclavine-I which is further oxidized by easD in the presence of NAD(+), resulting in the formation of chanoclavine-I aldehyde. Chanoclavine-I aldehyde is the precursor of ergoamides and ergopeptines in Clavicipitaceae, and clavine-type alcaloids such as fumiclavine in Trichocomaceae. However, the metabolites downstream of chanoclavine-I aldehyde in Arthrodermataceae have not been identified yet. This chain is FAD-linked oxidoreductase easE, found in Arthroderma otae (strain ATCC MYA-4605 / CBS 113480) (Microsporum canis).